The following is a 341-amino-acid chain: tRNA N6-adenosine threonylcarbamoyltransferase (341 aa).

The Fe cation site is built by His111 and His115. Substrate is bound by residues 134–138 (LVSGG), Asp167, Gly180, and Asn277. Asp305 is a binding site for Fe cation.

Belongs to the KAE1 / TsaD family. The cofactor is Fe(2+).

The protein localises to the cytoplasm. It catalyses the reaction L-threonylcarbamoyladenylate + adenosine(37) in tRNA = N(6)-L-threonylcarbamoyladenosine(37) in tRNA + AMP + H(+). Required for the formation of a threonylcarbamoyl group on adenosine at position 37 (t(6)A37) in tRNAs that read codons beginning with adenine. Is involved in the transfer of the threonylcarbamoyl moiety of threonylcarbamoyl-AMP (TC-AMP) to the N6 group of A37, together with TsaE and TsaB. TsaD likely plays a direct catalytic role in this reaction. In Chromobacterium violaceum (strain ATCC 12472 / DSM 30191 / JCM 1249 / CCUG 213 / NBRC 12614 / NCIMB 9131 / NCTC 9757 / MK), this protein is tRNA N6-adenosine threonylcarbamoyltransferase.